Here is a 1337-residue protein sequence, read N- to C-terminus: Rho GTPase-activating protein 29 (1337 aa).

Positions 1–13 are enriched in polar residues; it reads MFRQGSNSGNKRM. Disordered regions lie at residues 1-20, 369-397, 513-551, and 564-654; these read MFRQ…ARLS, REEY…LEKK, SSKT…ADEV, and ERRS…TGLS. Residues 225 to 488 enclose the F-BAR domain; it reads EQVDLLLLKN…QAKKYEPGQR (264 aa). Residues 326–443 are a coiled coil; it reads LLARKNDLDK…SEILAQIRKL (118 aa). Basic and acidic residues predominate over residues 369-384; that stretch reads REEYEKARSSTSRTEE. Polar residues-rich tracts occupy residues 525-545 and 568-579; these read QNST…SMDN and NSSIDMQVPRTQ. Residues 596–613 are compositionally biased toward low complexity; the sequence is CSDSESAGGSSESRSMDS. The segment at 676–723 adopts a Phorbol-ester/DAG-type zinc-finger fold; it reads AHTHKLRKLRAPSKCRECDSLVVFHGAECEECSLACHKKCLETLAIQC. A Rho-GAP domain is found at 737–950; sequence IDFAQVVKNS…LLIKHHQMIF (214 aa). A compositionally biased stretch (polar residues) spans 960-973; that stretch reads TSPTVSQASFGSSI. Disordered regions lie at residues 960 to 983, 1016 to 1066, 1083 to 1114, 1149 to 1210, and 1273 to 1337; these read TSPT…LSRH, MKTG…AKPV, SRNT…TNFY, PPSG…KPSD, and TVSR…AHFV. A compositionally biased stretch (basic and acidic residues) spans 974 to 983; the sequence is QDKESKLSRH. Positions 1083–1092 are enriched in basic and acidic residues; the sequence is SRNTVEHDHS. 2 stretches are compositionally biased toward polar residues: residues 1161–1177 and 1295–1310; these read MASQ…SQSG and VTLS…TEEL. Residues 1325–1337 show a composition bias toward basic and acidic residues; that stretch reads RMQELEHREAHFV.

Functionally, GTPase activator for the Rho-type GTPases by converting them to an inactive GDP-bound state. Has strong activity toward RHOA, and weaker activity toward RAC1 and CDC42. This is Rho GTPase-activating protein 29 (arhgap29) from Danio rerio (Zebrafish).